A 374-amino-acid polypeptide reads, in one-letter code: Alpha-galactosylglucosyldiacylglycerol synthase (374 aa).

It belongs to the glycosyltransferase group 1 family. Glycosyltransferase 4 subfamily. Mg(2+) is required as a cofactor.

The protein localises to the cell membrane. It catalyses the reaction a 1,2-diacyl-3-O-(alpha-D-glucopyranosyl)-sn-glycerol + UDP-alpha-D-galactose = a 1,2-diacyl-3-O-[alpha-D-galactopyranosyl-(1-&gt;2)-alpha-D-glucopyranosyl]-sn-glycerol + UDP + H(+). Activated by the negatively charged lipid phosphatidylglycerol (PG). In terms of biological role, galactosyltransferase involved in the biosynthesis of the bilayer-forming membrane lipid alpha-galactosyl-glucosyldiacylglycerol which is involved in maintaining constant nonbilayer/bilayer conditions (curvature packing stress). Also involved in the beta-lactam resistance. Catalyzes the transfer of a galactosyl residue from UDP-Gal to alpha-glucosyl-DAG (1,2-diacyl-3-O-(alpha-D-glucopyranosyl)-sn-glycerol) acceptor to form the corresponding galactosyl-glycosyl-DAG product (3-O-alpha-(D-galactopyranosyl-alpha-(1-&gt;2)-D-glucopyranosyl)-1,2-diacyl-sn-glycerol). It can only use UDP-Gal as sugar donor and alpha-glucosyl-DAG is the preferred sugar acceptor. This is Alpha-galactosylglucosyldiacylglycerol synthase (cpoA) from Streptococcus pneumoniae (strain ATCC BAA-255 / R6).